A 262-amino-acid polypeptide reads, in one-letter code: GDT1-like protein C186.05c (262 aa).

A run of 5 helical transmembrane segments spans residues 31 to 51 (ISMI…ALLA), 57 to 77 (ASVF…AVLV), 83 to 103 (FLFP…IFGV), 208 to 228 (VLDV…VAVI), and 242 to 262 (VLFF…FQGF).

The protein belongs to the GDT1 family.

It is found in the endoplasmic reticulum membrane. The chain is GDT1-like protein C186.05c from Schizosaccharomyces pombe (strain 972 / ATCC 24843) (Fission yeast).